A 61-amino-acid chain; its full sequence is Metallothionein-2 (61 aa).

At methionine 1 the chain carries N-acetylmethionine. The segment at 1 to 29 (MDPNCSCAAGDSCTCAGSCKCKECKCTSC) is beta. A divalent metal cation is bound by residues cysteine 5, cysteine 7, cysteine 13, cysteine 15, cysteine 19, cysteine 21, cysteine 24, cysteine 26, cysteine 29, cysteine 33, cysteine 34, cysteine 36, cysteine 37, cysteine 41, cysteine 44, cysteine 48, cysteine 50, and cysteine 57. Residues 30–61 (KKSCCSCCPVGCAKCAQGCICKGASDKCSCCA) are alpha. At serine 58 the chain carries Phosphoserine. A divalent metal cation is bound by residues cysteine 59 and cysteine 60.

This sequence belongs to the metallothionein superfamily. Type 1 family. As to quaternary structure, interacts with EOLA1.

Functionally, metallothioneins have a high content of cysteine residues that bind various heavy metals; these proteins are transcriptionally regulated by both heavy metals and glucocorticoids. The sequence is that of Metallothionein-2 from Homo sapiens (Human).